The sequence spans 238 residues: MNKEEAKILIDFMEKIGYRFYEPELLYNALCHSSYAHEQKQRGRKDVESNERLEFLGDAVIDLLLAEYLYLEFPEASEGVMAKVKAAIASEEALAQIARDINLGRYMFLGRGEEVSSGRERDSLLADMLEAVVAAVYIDGGLTAVKKVFLSYFAKYAKEVVEGKIVFDYKTSLQEITQARYRKLPEYVLVNEKGPSHMKKFTVELRLSGKLIAVGEGPSIKEAEKEAARRAIEKLKGD.

Residues 9 to 141 (LIDFMEKIGY…VVAAVYIDGG (133 aa)) form the RNase III domain. Residue glutamate 54 participates in Mg(2+) binding. Aspartate 58 is a catalytic residue. Mg(2+)-binding residues include aspartate 127 and glutamate 130. The active site involves glutamate 130. Positions 168-237 (DYKTSLQEIT…ARRAIEKLKG (70 aa)) constitute a DRBM domain.

It belongs to the ribonuclease III family. As to quaternary structure, homodimer. Mg(2+) serves as cofactor.

It is found in the cytoplasm. The catalysed reaction is Endonucleolytic cleavage to 5'-phosphomonoester.. In terms of biological role, digests double-stranded RNA. Involved in the processing of primary rRNA transcript to yield the immediate precursors to the large and small rRNAs (23S and 16S). Processes some mRNAs, and tRNAs when they are encoded in the rRNA operon. Processes pre-crRNA and tracrRNA of type II CRISPR loci if present in the organism. In Pseudothermotoga lettingae (strain ATCC BAA-301 / DSM 14385 / NBRC 107922 / TMO) (Thermotoga lettingae), this protein is Ribonuclease 3.